A 175-amino-acid polypeptide reads, in one-letter code: Large ribosomal subunit protein uL10 (175 aa).

It belongs to the universal ribosomal protein uL10 family. In terms of assembly, part of the ribosomal stalk of the 50S ribosomal subunit. The N-terminus interacts with L11 and the large rRNA to form the base of the stalk. The C-terminus forms an elongated spine to which L12 dimers bind in a sequential fashion forming a multimeric L10(L12)X complex.

Its function is as follows. Forms part of the ribosomal stalk, playing a central role in the interaction of the ribosome with GTP-bound translation factors. This is Large ribosomal subunit protein uL10 from Prochlorococcus marinus (strain NATL2A).